A 181-amino-acid polypeptide reads, in one-letter code: uncharacterized protein (181 aa).

To M.jannaschii MJ1106.

This is an uncharacterized protein from Methanothermobacter thermautotrophicus (strain ATCC 29096 / DSM 1053 / JCM 10044 / NBRC 100330 / Delta H) (Methanobacterium thermoautotrophicum).